The chain runs to 84 residues: ATP synthase subunit c (84 aa).

2 helical membrane passes run 1–21 and 53–73; these read MLAW…ALVG and LLFA…VALI.

The protein belongs to the ATPase C chain family. As to quaternary structure, F-type ATPases have 2 components, F(1) - the catalytic core - and F(0) - the membrane proton channel. F(1) has five subunits: alpha(3), beta(3), gamma(1), delta(1), epsilon(1). F(0) has three main subunits: a(1), b(2) and c(10-14). The alpha and beta chains form an alternating ring which encloses part of the gamma chain. F(1) is attached to F(0) by a central stalk formed by the gamma and epsilon chains, while a peripheral stalk is formed by the delta and b chains.

It is found in the cell inner membrane. F(1)F(0) ATP synthase produces ATP from ADP in the presence of a proton or sodium gradient. F-type ATPases consist of two structural domains, F(1) containing the extramembraneous catalytic core and F(0) containing the membrane proton channel, linked together by a central stalk and a peripheral stalk. During catalysis, ATP synthesis in the catalytic domain of F(1) is coupled via a rotary mechanism of the central stalk subunits to proton translocation. In terms of biological role, key component of the F(0) channel; it plays a direct role in translocation across the membrane. A homomeric c-ring of between 10-14 subunits forms the central stalk rotor element with the F(1) delta and epsilon subunits. This is ATP synthase subunit c from Dictyoglomus thermophilum (strain ATCC 35947 / DSM 3960 / H-6-12).